Here is a 63-residue protein sequence, read N- to C-terminus: Alpha-conotoxin-like Sm1.3 (63 aa).

Residues 1–16 (MFTVFLLVVLATTVVS) form the signal peptide. Positions 17-43 (SPSDRASDGRNAAANEKASDVIALALK) are excised as a propeptide. Cystine bridges form between cysteine 45–cysteine 51 and cysteine 46–cysteine 59. Methionine 58 carries the methionine sulfoxide; partial modification. Cysteine 59 is modified (cysteine amide; partial).

Belongs to the conotoxin A superfamily. Expressed by the venom duct.

The protein resides in the secreted. Alpha-conotoxins act on postsynaptic membranes, they bind to the nicotinic acetylcholine receptors (nAChR) and thus inhibit them. The polypeptide is Alpha-conotoxin-like Sm1.3 (Conus stercusmuscarum (Fly-specked cone)).